Consider the following 106-residue polypeptide: MNKRAKSKNREPLRKSPVKRGDEVVVITGSERGKRGKVLKVLRNTHKVIVEGIKMVKKAVRPSQDNPKGGIVEKEATIAISNVMLASKWEKRQEKKKVAVEKKEQG.

Positions 1 to 20 (MNKRAKSKNREPLRKSPVKR) are disordered. A compositionally biased stretch (basic and acidic residues) spans 8-20 (KNREPLRKSPVKR).

Belongs to the universal ribosomal protein uL24 family. Part of the 50S ribosomal subunit.

One of two assembly initiator proteins, it binds directly to the 5'-end of the 23S rRNA, where it nucleates assembly of the 50S subunit. Functionally, one of the proteins that surrounds the polypeptide exit tunnel on the outside of the subunit. The sequence is that of Large ribosomal subunit protein uL24 from Methylacidiphilum infernorum (isolate V4) (Methylokorus infernorum (strain V4)).